We begin with the raw amino-acid sequence, 150 residues long: Avidin-related protein 7 (150 aa).

The N-terminal stretch at 1–24 (MVHATSPLLLLLLLSLALVAPGLS) is a signal peptide. The Avidin-like domain occupies 26–147 (RKCSLTGEWD…GYNNFTRQRT (122 aa)). Residues C28 and C105 are joined by a disulfide bond. Biotin is bound by residues N36 and S40. N41 and N54 each carry an N-linked (GlcNAc...) asparagine glycan. Residues Y57, T59, and D63 each contribute to the biotin site. N-linked (GlcNAc...) asparagine glycosylation occurs at N93. Residues S95, S99, and N140 each contribute to the biotin site. An N-linked (GlcNAc...) asparagine glycan is attached at N141.

This sequence belongs to the avidin/streptavidin family. Homotetramer. Glycosylated.

The protein localises to the secreted. In terms of biological role, forms a strong non-covalent specific complex with biotin. The protein is Avidin-related protein 7 (AVR7) of Gallus gallus (Chicken).